We begin with the raw amino-acid sequence, 433 residues long: Histidine--tRNA ligase (433 aa).

This sequence belongs to the class-II aminoacyl-tRNA synthetase family. In terms of assembly, homodimer.

The protein resides in the cytoplasm. It catalyses the reaction tRNA(His) + L-histidine + ATP = L-histidyl-tRNA(His) + AMP + diphosphate + H(+). The sequence is that of Histidine--tRNA ligase from Azoarcus sp. (strain BH72).